The sequence spans 155 residues: UPF0178 protein ACICU_02858 (155 aa).

Residues 120-155 (GAGVQTGGPPPISERDKREFSSALDQTILKQKRKTA) form a disordered region.

Belongs to the UPF0178 family.

The chain is UPF0178 protein ACICU_02858 from Acinetobacter baumannii (strain ACICU).